The sequence spans 398 residues: Lysophosphatidylserine lipase ABHD12 (398 aa).

Basic and acidic residues predominate over residues 1–16 (MRKRTEPVALEHERRT). The segment at 1 to 24 (MRKRTEPVALEHERRTASGSPSAG) is disordered. The Cytoplasmic portion of the chain corresponds to 1–74 (MRKRTEPVAL…RKGLCFRLRK (74 aa)). A helical membrane pass occupies residues 75-95 (ILFFVLGLYVAIPFLIKLCPG). At 96–398 (IQAKLIFLNF…LGKSEPGRQH (303 aa)) the chain is on the extracellular side. N-linked (GlcNAc...) asparagine glycosylation occurs at asparagine 123. Residue serine 246 is the Nucleophile of the active site. Active-site charge relay system residues include aspartate 333 and histidine 372.

Belongs to the serine esterase family.

The protein resides in the endoplasmic reticulum membrane. The enzyme catalyses 1-(9Z-octadecenoyl)-sn-glycero-3-phospho-L-serine + H2O = sn-glycero-3-phospho-L-serine + (9Z)-octadecenoate + H(+). The catalysed reaction is 1-(9Z-octadecenoyl)-sn-glycero-3-phospho-(1'-sn-glycerol) + H2O = sn-glycero-3-phospho-(1'-sn-glycerol) + (9Z)-octadecenoate + H(+). It catalyses the reaction 1-(9Z-octadecenoyl)-sn-glycero-3-phospho-(1D-myo-inositol) + H2O = sn-glycero-3-phospho-1D-myo-inositol + (9Z)-octadecenoate + H(+). It carries out the reaction 1-(9Z-octadecenoyl)-sn-glycero-3-phosphoethanolamine + H2O = sn-glycero-3-phosphoethanolamine + (9Z)-octadecenoate + H(+). The enzyme catalyses 1-(9Z-octadecenoyl)-sn-glycero-3-phosphocholine + H2O = 1-(9Z-octadecenoyl)-sn-glycerol + phosphocholine + H(+). The catalysed reaction is 2-(9Z-octadecenoyl)-glycerol + H2O = glycerol + (9Z)-octadecenoate + H(+). It catalyses the reaction 1-hexadecanoyl-sn-glycero-3-phospho-L-serine + H2O = sn-glycero-3-phospho-L-serine + hexadecanoate + H(+). It carries out the reaction 2-(5Z,8Z,11Z,14Z-eicosatetraenoyl)-glycerol + H2O = glycerol + (5Z,8Z,11Z,14Z)-eicosatetraenoate + H(+). The enzyme catalyses Hydrolyzes glycerol monoesters of long-chain fatty acids.. The catalysed reaction is 1-decanoylglycerol + H2O = decanoate + glycerol + H(+). It catalyses the reaction 1-dodecanoylglycerol + H2O = dodecanoate + glycerol + H(+). It carries out the reaction 1-tetradecanoylglycerol + H2O = tetradecanoate + glycerol + H(+). The enzyme catalyses 2-hexadecanoylglycerol + H2O = glycerol + hexadecanoate + H(+). The catalysed reaction is 1-(9Z-octadecenoyl)-glycerol + H2O = glycerol + (9Z)-octadecenoate + H(+). It catalyses the reaction 2-(9Z,12Z-octadecadienoyl)-glycerol + H2O = (9Z,12Z)-octadecadienoate + glycerol + H(+). It carries out the reaction 1-(5Z,8Z,11Z,14Z-eicosatetraenoyl)-glycerol + H2O = glycerol + (5Z,8Z,11Z,14Z)-eicosatetraenoate + H(+). The enzyme catalyses 1-(9Z,12Z-octadecadienoyl)-glycerol + H2O = (9Z,12Z)-octadecadienoate + glycerol + H(+). The catalysed reaction is 1-hexadecanoylglycerol + H2O = glycerol + hexadecanoate + H(+). It catalyses the reaction 1-octadecanoylglycerol + H2O = octadecanoate + glycerol + H(+). It carries out the reaction 1-octadecanoyl-2-(9,10-epoxyoctadecanoyl)-sn-glycero-3-phospho-L-serine + H2O = 9,10-epoxyoctadecanoate + 1-octadecanoyl-sn-glycero-3-phosphoserine + H(+). The enzyme catalyses 1-octadecanoyl-2-(10-hydroxyoctadecanoyl)-sn-glycero-3-phospho-L-serine + H2O = 1-octadecanoyl-sn-glycero-3-phosphoserine + 10-hydroxyoctadecanoate + H(+). The catalysed reaction is 1-hexadecanoyl-2-(10-hydroxyoctadecanoyl)-sn-glycero-3-phospho-L-serine + H2O = 10-hydroxyoctadecanoate + 1-hexadecanoyl-sn-glycero-3-phospho-L-serine + H(+). Functionally, lysophosphatidylserine (LPS) lipase that mediates the hydrolysis of lysophosphatidylserine, a class of signaling lipids that regulates immunological and neurological processes. Represents a major lysophosphatidylserine lipase in the brain, thereby playing a key role in the central nervous system. Also able to hydrolyze oxidized phosphatidylserine; oxidized phosphatidylserine is produced in response to severe inflammatory stress and constitutes a proapoptotic 'eat me' signal. Also has monoacylglycerol (MAG) lipase activity: hydrolyzes 2-arachidonoylglycerol (2-AG), thereby acting as a regulator of endocannabinoid signaling pathways. Has a strong preference for very-long-chain lipid substrates; substrate specificity is likely due to improved catalysis and not improved substrate binding. This Bos taurus (Bovine) protein is Lysophosphatidylserine lipase ABHD12.